Reading from the N-terminus, the 125-residue chain is Large ribosomal subunit protein bL12 (125 aa).

The protein belongs to the bacterial ribosomal protein bL12 family. As to quaternary structure, homodimer. Part of the ribosomal stalk of the 50S ribosomal subunit. Forms a multimeric L10(L12)X complex, where L10 forms an elongated spine to which 2 to 4 L12 dimers bind in a sequential fashion. Binds GTP-bound translation factors.

Forms part of the ribosomal stalk which helps the ribosome interact with GTP-bound translation factors. Is thus essential for accurate translation. The polypeptide is Large ribosomal subunit protein bL12 (Nitrobacter winogradskyi (strain ATCC 25391 / DSM 10237 / CIP 104748 / NCIMB 11846 / Nb-255)).